The chain runs to 235 residues: Carbohydrate deacetylase (235 aa).

Mg(2+) contacts are provided by histidine 61 and histidine 124.

The protein belongs to the YdjC deacetylase family. Mg(2+) serves as cofactor.

Functionally, probably catalyzes the deacetylation of acetylated carbohydrates an important step in the degradation of oligosaccharides. In Bacillus cereus (strain 03BB102), this protein is Carbohydrate deacetylase.